The chain runs to 632 residues: 1-deoxy-D-xylulose-5-phosphate synthase (632 aa).

The tract at residues 1 to 25 is disordered; sequence MPTTFHEIPRKRPTTPLLDRANTPD. Thiamine diphosphate contacts are provided by residues H87 and 128–130; that span reads GHS. D159 serves as a coordination point for Mg(2+). Residues 160 to 161, N188, F295, and E378 contribute to the thiamine diphosphate site; that span reads GA. N188 provides a ligand contact to Mg(2+).

Belongs to the transketolase family. DXPS subfamily. Homodimer. Mg(2+) is required as a cofactor. It depends on thiamine diphosphate as a cofactor.

It catalyses the reaction D-glyceraldehyde 3-phosphate + pyruvate + H(+) = 1-deoxy-D-xylulose 5-phosphate + CO2. Its pathway is metabolic intermediate biosynthesis; 1-deoxy-D-xylulose 5-phosphate biosynthesis; 1-deoxy-D-xylulose 5-phosphate from D-glyceraldehyde 3-phosphate and pyruvate: step 1/1. Catalyzes the acyloin condensation reaction between C atoms 2 and 3 of pyruvate and glyceraldehyde 3-phosphate to yield 1-deoxy-D-xylulose-5-phosphate (DXP). This is 1-deoxy-D-xylulose-5-phosphate synthase from Pseudomonas fluorescens (strain Pf0-1).